The following is a 90-amino-acid chain: MKMHQIPTPTMSQVIMLNDSITTAEFMVSALRDFFDKPLEEAQKLMLSIHRDGDGVCGVYPYEIAIYKAVCVRDKARARFPLRLMVQEVK.

The protein belongs to the ClpS family. In terms of assembly, binds to the N-terminal domain of the chaperone ClpA.

Functionally, involved in the modulation of the specificity of the ClpAP-mediated ATP-dependent protein degradation. The chain is ATP-dependent Clp protease adapter protein ClpS from Helicobacter pylori (strain J99 / ATCC 700824) (Campylobacter pylori J99).